A 96-amino-acid polypeptide reads, in one-letter code: Small ribosomal subunit protein uS15 (96 aa).

This sequence belongs to the universal ribosomal protein uS15 family. In terms of assembly, part of the 30S ribosomal subunit. Forms a bridge to the 50S subunit in the 70S ribosome, contacting the 23S rRNA.

Functionally, one of the primary rRNA binding proteins, it binds directly to 16S rRNA where it helps nucleate assembly of the platform of the 30S subunit by binding and bridging several RNA helices of the 16S rRNA. Forms an intersubunit bridge (bridge B4) with the 23S rRNA of the 50S subunit in the ribosome. In Streptomyces griseus subsp. griseus (strain JCM 4626 / CBS 651.72 / NBRC 13350 / KCC S-0626 / ISP 5235), this protein is Small ribosomal subunit protein uS15.